We begin with the raw amino-acid sequence, 161 residues long: 2-C-methyl-D-erythritol 2,4-cyclodiphosphate synthase (161 aa).

A divalent metal cation contacts are provided by D10 and H12. Residues 10–12 (DVH) and 36–37 (HS) contribute to the 4-CDP-2-C-methyl-D-erythritol 2-phosphate site. An a divalent metal cation-binding site is contributed by H44. 4-CDP-2-C-methyl-D-erythritol 2-phosphate-binding positions include 58–60 (DIG), 63–67 (FSDTD), and R144.

Belongs to the IspF family. Homotrimer. It depends on a divalent metal cation as a cofactor.

The enzyme catalyses 4-CDP-2-C-methyl-D-erythritol 2-phosphate = 2-C-methyl-D-erythritol 2,4-cyclic diphosphate + CMP. It participates in isoprenoid biosynthesis; isopentenyl diphosphate biosynthesis via DXP pathway; isopentenyl diphosphate from 1-deoxy-D-xylulose 5-phosphate: step 4/6. Functionally, involved in the biosynthesis of isopentenyl diphosphate (IPP) and dimethylallyl diphosphate (DMAPP), two major building blocks of isoprenoid compounds. Catalyzes the conversion of 4-diphosphocytidyl-2-C-methyl-D-erythritol 2-phosphate (CDP-ME2P) to 2-C-methyl-D-erythritol 2,4-cyclodiphosphate (ME-CPP) with a corresponding release of cytidine 5-monophosphate (CMP). The polypeptide is 2-C-methyl-D-erythritol 2,4-cyclodiphosphate synthase (Burkholderia ambifaria (strain ATCC BAA-244 / DSM 16087 / CCUG 44356 / LMG 19182 / AMMD) (Burkholderia cepacia (strain AMMD))).